We begin with the raw amino-acid sequence, 207 residues long: Holliday junction branch migration complex subunit RuvA (207 aa).

Residues 1 to 68 (MIGYLQGSLA…EDQWLLFGFL (68 aa)) form a domain I region. The domain II stretch occupies residues 69 to 147 (QMAERDLFRQ…EWREEAGLLP (79 aa)). Positions 148–158 (SATAAPIAAVQ) are flexible linker. Residues 158–207 (QEDVEMTLLALGYNNREILQALTAIAQENLVQSGQPAEDWIREAIAWLSR) form a domain III region.

The protein belongs to the RuvA family. Homotetramer. Forms an RuvA(8)-RuvB(12)-Holliday junction (HJ) complex. HJ DNA is sandwiched between 2 RuvA tetramers; dsDNA enters through RuvA and exits via RuvB. An RuvB hexamer assembles on each DNA strand where it exits the tetramer. Each RuvB hexamer is contacted by two RuvA subunits (via domain III) on 2 adjacent RuvB subunits; this complex drives branch migration. In the full resolvosome a probable DNA-RuvA(4)-RuvB(12)-RuvC(2) complex forms which resolves the HJ.

It is found in the cytoplasm. Functionally, the RuvA-RuvB-RuvC complex processes Holliday junction (HJ) DNA during genetic recombination and DNA repair, while the RuvA-RuvB complex plays an important role in the rescue of blocked DNA replication forks via replication fork reversal (RFR). RuvA specifically binds to HJ cruciform DNA, conferring on it an open structure. The RuvB hexamer acts as an ATP-dependent pump, pulling dsDNA into and through the RuvAB complex. HJ branch migration allows RuvC to scan DNA until it finds its consensus sequence, where it cleaves and resolves the cruciform DNA. This Synechococcus elongatus (strain ATCC 33912 / PCC 7942 / FACHB-805) (Anacystis nidulans R2) protein is Holliday junction branch migration complex subunit RuvA.